A 223-amino-acid polypeptide reads, in one-letter code: Ribonuclease 3 (223 aa).

Residues 4–127 (LNRLEEHLGY…LMGAIYLESG (124 aa)) form the RNase III domain. Glu-40 serves as a coordination point for Mg(2+). Asp-44 is an active-site residue. Mg(2+) is bound by residues Asp-113 and Glu-116. The active site involves Glu-116. The region spanning 154-223 (DYKTTLQEIT…AWKVLQGMNI (70 aa)) is the DRBM domain.

This sequence belongs to the ribonuclease III family. Homodimer. It depends on Mg(2+) as a cofactor.

The protein localises to the cytoplasm. The catalysed reaction is Endonucleolytic cleavage to 5'-phosphomonoester.. Digests double-stranded RNA. Involved in the processing of primary rRNA transcript to yield the immediate precursors to the large and small rRNAs (23S and 16S). Processes some mRNAs, and tRNAs when they are encoded in the rRNA operon. Processes pre-crRNA and tracrRNA of type II CRISPR loci if present in the organism. The sequence is that of Ribonuclease 3 from Campylobacter fetus subsp. fetus (strain 82-40).